The following is a 609-amino-acid chain: Adenine deaminase (609 aa).

The protein belongs to the metallo-dependent hydrolases superfamily. Adenine deaminase family. Mn(2+) serves as cofactor.

It catalyses the reaction adenine + H2O + H(+) = hypoxanthine + NH4(+). This Cenarchaeum symbiosum (strain A) protein is Adenine deaminase.